Consider the following 455-residue polypeptide: UDP-N-acetylmuramoylalanine--D-glutamate ligase (455 aa).

ATP is bound at residue 119 to 125; that stretch reads GTNGKTT.

It belongs to the MurCDEF family.

The protein localises to the cytoplasm. It carries out the reaction UDP-N-acetyl-alpha-D-muramoyl-L-alanine + D-glutamate + ATP = UDP-N-acetyl-alpha-D-muramoyl-L-alanyl-D-glutamate + ADP + phosphate + H(+). Its pathway is cell wall biogenesis; peptidoglycan biosynthesis. Cell wall formation. Catalyzes the addition of glutamate to the nucleotide precursor UDP-N-acetylmuramoyl-L-alanine (UMA). In Listeria monocytogenes serotype 4b (strain F2365), this protein is UDP-N-acetylmuramoylalanine--D-glutamate ligase.